The chain runs to 285 residues: Avenin-like b2 (285 aa).

Residues 1 to 18 (MKVFILALLALTATTAIA) form the signal peptide.

It belongs to the prolamin family. Contains disulfide bonds.

Its function is as follows. Seed storage protein. Might be integrated via inter-chain disulfide bonds within the glutenin polymer. The chain is Avenin-like b2 from Triticum aestivum (Wheat).